Here is a 1528-residue protein sequence, read N- to C-terminus: Zinc finger FYVE domain-containing protein 16 (1528 aa).

A Phosphoserine modification is found at Ser120. The tract at residues 629 to 664 (TQAVGGARPKQLLSLPPGTRSSKELNKPDVVDVPES) is disordered. Residues 649–658 (SSKELNKPDV) are compositionally biased toward basic and acidic residues. The segment at 735–793 (DSEAPNCMNCQVKFTFTKRRHHCRACGKVFCGVCCNRKCKLQYLEKEARVCVICYETIN) adopts an FYVE-type zinc-finger fold. Zn(2+) contacts are provided by Cys741, Cys744, Cys757, Cys760, Cys765, Cys768, Cys785, and Cys788. Residues Ser803, Ser833, Ser884, and Ser927 each carry the phosphoserine modification. The segment at 819–849 (TDQPLQETQTSSTPSPTTLPISALKQPNVEG) is disordered. The span at 821-838 (QPLQETQTSSTPSPTTLP) shows a compositional bias: low complexity. Residues 928-949 (PTCHTAPVERLPGNTGTEGLPM) are disordered.

Interacts (via C-terminus) with TOM1 (via C-terminus); interaction is required to target TOM1 to endosomes. Does not interact with TOM1L1 or TOM1L2.

It is found in the cytoplasm. The protein resides in the early endosome membrane. Its function is as follows. May be involved in regulating membrane trafficking in the endosomal pathway. Overexpression induces endosome aggregation. Required to target TOM1 to endosomes. This is Zinc finger FYVE domain-containing protein 16 (Zfyve16) from Mus musculus (Mouse).